A 440-amino-acid polypeptide reads, in one-letter code: Putative purine permease YwdJ (440 aa).

Helical transmembrane passes span L3–V23, L39–H59, P67–A87, L96–I116, V130–I150, G156–T176, I188–I208, G231–M251, L283–I303, F314–F334, V341–F361, S374–L394, and P399–A419.

This sequence belongs to the nucleobase:cation symporter-2 (NCS2) (TC 2.A.40) family.

It localises to the cell membrane. In Bacillus subtilis (strain 168), this protein is Putative purine permease YwdJ (ywdJ).